A 300-amino-acid chain; its full sequence is Ankyrin repeat domain-containing protein 54 (300 aa).

The disordered stretch occupies residues 1–27; sequence MAAAAGDADDEPRSGHSSSEGECAVAP. Ala-2 is subject to N-acetylalanine. 2 positions are modified to phosphoserine: Ser-58 and Ser-63. The short motif at 99-117 is the Nuclear localization signal (NLS) element; it reads RRLGPTGKEVHALKRLRDS. 4 ANK repeats span residues 109 to 138, 142 to 171, 175 to 204, and 208 to 244; these read HALKRLRDSANANDVETVQQLLEDGADPCA, KGRTALHFASCNGNDQIVQLLLDHGADPNQ, LGNTPLHLAACTNHVPVITTLLRGGARVDA, and AGRTPLHLAKSKLNILQEGHAQCLEAVRLEVKQIIHM. The interval 141–241 is LYN-binding; sequence DKGRTALHFA…EAVRLEVKQI (101 aa). Residues 283 to 293 carry the Nuclear export signal (NES) motif; the sequence is LLASFTSLSLQ.

As to quaternary structure, interacts (via ankyrin repeat region) with LYN (via SH3-domain) in an activation-independent status of LYN. Forms a multiprotein complex with LYN and HCLS1. Interacts with TSN2, VAV1, DBNL and LASP1.

Its subcellular location is the nucleus. The protein localises to the cytoplasm. It is found in the midbody. In terms of biological role, plays an important role in regulating intracellular signaling events associated with erythroid terminal differentiation. The chain is Ankyrin repeat domain-containing protein 54 (ANKRD54) from Homo sapiens (Human).